Reading from the N-terminus, the 373-residue chain is Glutamate 5-kinase (373 aa).

Lys15 lines the ATP pocket. 3 residues coordinate substrate: Ser55, Asp142, and Asn154. ATP-binding positions include 174-175 (TD) and 216-222 (TGGMATK). Residues 281 to 359 (AGSIVVDAGA…SEIERILGFR (79 aa)) form the PUA domain.

Belongs to the glutamate 5-kinase family.

Its subcellular location is the cytoplasm. The enzyme catalyses L-glutamate + ATP = L-glutamyl 5-phosphate + ADP. Its pathway is amino-acid biosynthesis; L-proline biosynthesis; L-glutamate 5-semialdehyde from L-glutamate: step 1/2. Catalyzes the transfer of a phosphate group to glutamate to form L-glutamate 5-phosphate. This Geobacter sp. (strain M21) protein is Glutamate 5-kinase.